A 292-amino-acid chain; its full sequence is Small ribosomal subunit biogenesis GTPase RsgA (292 aa).

Residues 64–221 (RSELFRPAVA…LVDTPGFSSL (158 aa)) enclose the CP-type G domain. GTP-binding positions include 113 to 116 (NKMD) and 164 to 172 (GPSGVGKST). Residues C245, C250, H252, and C258 each contribute to the Zn(2+) site.

The protein belongs to the TRAFAC class YlqF/YawG GTPase family. RsgA subfamily. In terms of assembly, monomer. Associates with 30S ribosomal subunit, binds 16S rRNA. It depends on Zn(2+) as a cofactor.

It is found in the cytoplasm. Functionally, one of several proteins that assist in the late maturation steps of the functional core of the 30S ribosomal subunit. Helps release RbfA from mature subunits. May play a role in the assembly of ribosomal proteins into the subunit. Circularly permuted GTPase that catalyzes slow GTP hydrolysis, GTPase activity is stimulated by the 30S ribosomal subunit. This is Small ribosomal subunit biogenesis GTPase RsgA from Clostridium botulinum (strain Kyoto / Type A2).